Here is a 172-residue protein sequence, read N- to C-terminus: Transcriptional repressor NrdR (172 aa).

The segment at 3–34 is a zinc-finger region; that stretch reads CPFCGEADTKVIDSRLVAEGDQVRRRRECLSC. Residues 49 to 139 enclose the ATP-cone domain; that stretch reads PRVVKQDGTR…VYRSFQDINE (91 aa).

The protein belongs to the NrdR family. Requires Zn(2+) as cofactor.

Functionally, negatively regulates transcription of bacterial ribonucleotide reductase nrd genes and operons by binding to NrdR-boxes. In Marinobacter nauticus (strain ATCC 700491 / DSM 11845 / VT8) (Marinobacter aquaeolei), this protein is Transcriptional repressor NrdR.